The following is a 435-amino-acid chain: MATVVIAGRANVGKSTLFNRLIGRRKAITEKIEGVTRDIIKGLVVYNETSFLLYDTCGVFESTRDPVLLAMRDKAFEAFRKADLILFVVDGRSGITSEDEYVAQQLRKIAKKVLMVINKSENMSVVEKNLPDIMKLGFAEYIPVSAQHGNNIDELLDKITNLLRESGEKSMLFKESSPKIAIVGKPNVGKSSLFNALLNMDRATVTPVPGTTRDPVDEMIEINGKKYILVDTAGMRRKSRIERKTIEQFSISRTIDTIQSADVVLLVIDATEGVTRQDKRIADLILSSGRAMVCVINKFDLVNVRKKDYEAALFTEMPFINFCRIVFTSAVKKSGLEKLFNAIDEAYESYCRKVPQQLLSKLASQLPLLSPALSRKNLRIYSIKQIKIKPPKFVIMVNKKELTDYQTEKTLQRFIRERVDQFTGTPLVIEFKSRR.

EngA-type G domains follow at residues 2-167 and 178-351; these read ATVV…RESG and PKIA…ESYC. GTP-binding positions include 8–15, 55–59, 118–121, 184–191, 231–235, and 297–300; these read GRANVGKS, DTCGV, NKSE, GKPNVGKS, DTAGM, and NKFD. In terms of domain architecture, KH-like spans 352-435; that stretch reads RKVPQQLLSK…PLVIEFKSRR (84 aa).

It belongs to the TRAFAC class TrmE-Era-EngA-EngB-Septin-like GTPase superfamily. EngA (Der) GTPase family. Associates with the 50S ribosomal subunit.

Functionally, GTPase that plays an essential role in the late steps of ribosome biogenesis. The polypeptide is GTPase Der (Pseudothermotoga lettingae (strain ATCC BAA-301 / DSM 14385 / NBRC 107922 / TMO) (Thermotoga lettingae)).